Reading from the N-terminus, the 72-residue chain is UPF0352 protein HI_0840 (72 aa).

It belongs to the UPF0352 family.

The protein is UPF0352 protein HI_0840 of Haemophilus influenzae (strain ATCC 51907 / DSM 11121 / KW20 / Rd).